We begin with the raw amino-acid sequence, 139 residues long: Mitochondrial intermembrane space import and assembly protein 40 (139 aa).

Disulfide bonds link Cys-53–Cys-55, Cys-64–Cys-97, and Cys-74–Cys-87. In terms of domain architecture, CHCH spans 61–105 (SGPCGEQFKSAFSCFHYSTEDIKGSDCIDQFRAMQECMQKYPDLY). Short sequence motifs (cx9C motif) lie at residues 64 to 74 (CGEQFKSAFSC) and 87 to 97 (CIDQFRAMQEC). The tract at residues 102-139 (PDLYPQDEEEEEEAKPVEPVEETADTKVSAAKEQGTSS) is disordered. Over residues 106–124 (PQDEEEEEEAKPVEPVEET) the composition is skewed to acidic residues.

In terms of assembly, monomer. Can form homooligomers. Interacts with GFER and forms transient disulfide bonds with GFER. Interacts with MICU1. Interacts with COX19 forming transient intermolecular disulfide bridges. Interacts with COA7 through transient intermolecular disulfide bonds. Interacts with AIFM1; the interaction increases in presence of NADH. Interacts with NDUFB10. Forms intrachain disulfide bridges, but exists in different redox states. Widely expressed. Present at high level in liver and kidney, followed by lung, brain, heart and spleen (at protein level).

Its subcellular location is the mitochondrion intermembrane space. Functionally, central component of a redox-sensitive mitochondrial intermembrane space import machinery which is required for the biogenesis of respiratory chain complexes. Functions as chaperone and catalyzes the formation of disulfide bonds in substrate proteins, such as COX17, COX19, MICU1 and COA7. Required for the import and folding of small cysteine-containing proteins (small Tim) in the mitochondrial intermembrane space (IMS). Required for the import of COA7 in the IMS. Precursor proteins to be imported into the IMS are translocated in their reduced form into the mitochondria. The oxidized form of CHCHD4/MIA40 forms a transient intermolecular disulfide bridge with the reduced precursor protein, resulting in oxidation of the precursor protein that now contains an intramolecular disulfide bond and is able to undergo folding in the IMS. Reduced CHCHD4/MIA40 is then reoxidized by GFER/ERV1 via a disulfide relay system. Mediates formation of disulfide bond in MICU1 in the IMS, promoting formation of the MICU1-MICU2 heterodimer that regulates mitochondrial calcium uptake. The polypeptide is Mitochondrial intermembrane space import and assembly protein 40 (Chchd4) (Mus musculus (Mouse)).